The following is a 959-amino-acid chain: ATP-dependent 6-phosphofructokinase subunit beta (959 aa).

The interval 2–573 is N-terminal catalytic PFK domain 1; the sequence is TVTTPFVNGT…HLNNFMAINS (572 aa). Residues 144-167 are disordered; the sequence is KNAVSTKPTPPPAPEASAESGLSS. Thr-152 is subject to Phosphothreonine. Low complexity predominate over residues 158-167; the sequence is EASAESGLSS. Phosphoserine occurs at positions 163 and 171. ATP is bound by residues Gly-206, 270–271, and 300–303; these read RC and GDGS. Asp-301 contacts Mg(2+). Beta-D-fructose 6-phosphate is bound by residues 346–348, Arg-383, 390–392, Glu-447, Arg-475, and 481–484; these read SID, MGR, and HVQR. Asp-348 serves as the catalytic Proton acceptor. The tract at residues 574 to 587 is interdomain linker; the sequence is ADHNEPKLPKDKRL. The segment at 588 to 959 is C-terminal regulatory PFK domain 2; it reads KIAIVNVGAP…DHLVGRKRVD (372 aa). Beta-D-fructose 2,6-bisphosphate is bound by residues Arg-658, 716–720, Arg-754, and 761–763; these read TLSNN and QGG. Ser-803 carries the post-translational modification Phosphoserine. Beta-D-fructose 2,6-bisphosphate contacts are provided by residues Lys-847, 853 to 856, and Arg-935; that span reads HVQQ.

It belongs to the phosphofructokinase type A (PFKA) family. ATP-dependent PFK group I subfamily. Eukaryotic two domain clade 'E' sub-subfamily. Heterooctamer of 4 alpha and 4 beta chains. Mg(2+) serves as cofactor.

The protein localises to the cytoplasm. It is found in the mitochondrion outer membrane. The catalysed reaction is beta-D-fructose 6-phosphate + ATP = beta-D-fructose 1,6-bisphosphate + ADP + H(+). The protein operates within carbohydrate degradation; glycolysis; D-glyceraldehyde 3-phosphate and glycerone phosphate from D-glucose: step 3/4. Allosterically activated by ADP, AMP, or fructose 2,6-bisphosphate, and allosterically inhibited by ATP or citrate. In terms of biological role, catalyzes the phosphorylation of D-fructose 6-phosphate to fructose 1,6-bisphosphate by ATP, the first committing step of glycolysis. The chain is ATP-dependent 6-phosphofructokinase subunit beta (PFK2) from Saccharomyces cerevisiae (strain ATCC 204508 / S288c) (Baker's yeast).